The primary structure comprises 690 residues: Cysteine-rich receptor-like protein kinase 21 (690 aa).

Residues 1–24 (MQKNKMVDLRAIFWFVVISSCAVA) form the signal peptide. Positions 25 to 129 (APTCIQRSDF…CLVRYSNHLI (105 aa)) constitute a Gnk2-homologous 1 domain. At 25-281 (APTCIQRSDF…KDGKNISTGS (257 aa)) the chain is on the extracellular side. Asparagine 130, asparagine 148, asparagine 155, asparagine 220, asparagine 268, and asparagine 276 each carry an N-linked (GlcNAc...) asparagine glycan. The 107-residue stretch at 140-246 (AEYIEYKYNT…CFMRWDLQPF (107 aa)) folds into the Gnk2-homologous 2 domain. A helical transmembrane segment spans residues 282–302 (IVAIAVVSVVVSTVLLALGYA). Residues 303–690 (VSRRRKAYQS…DASITSVRPR (388 aa)) are Cytoplasmic-facing. The region spanning 363–640 (FHKSNKLGHG…IFRMLTNVSI (278 aa)) is the Protein kinase domain. ATP-binding positions include 369–377 (LGHGGFGAV) and lysine 391. Tyrosine 436 bears the Phosphotyrosine mark. Residue aspartate 488 is the Proton acceptor of the active site. The residue at position 492 (serine 492) is a Phosphoserine. Threonine 528 carries the phosphothreonine modification. Tyrosine 536 bears the Phosphotyrosine mark.

Belongs to the protein kinase superfamily. Ser/Thr protein kinase family. CRK subfamily.

It localises to the membrane. It catalyses the reaction L-seryl-[protein] + ATP = O-phospho-L-seryl-[protein] + ADP + H(+). The enzyme catalyses L-threonyl-[protein] + ATP = O-phospho-L-threonyl-[protein] + ADP + H(+). The polypeptide is Cysteine-rich receptor-like protein kinase 21 (CRK21) (Arabidopsis thaliana (Mouse-ear cress)).